The following is a 411-amino-acid chain: MPVDELKRQLEIIKRGVAEIVPEEELVEKLKKSLNEGKPLRVKLGLDPTAPDIHLGHTVVLQKLKQFQSLGHEVIIIIGDFTAQIGDPTGKKETRKQLSWEEVLENAKTYQEQIFKILDPAKTKMVFNSEWLAKLTFADVIKLASKYTVARMLEREDFAKRFKEGQPISIHEFFYPLMQGYDSVALKADIELGGTDQKFNLLMGRTLQKEYGQEPQIAIMMPILEGTDGVQKMSKSLGNYIGINETPQEMFGKIMSIPDTLILRYLELLTSVPMETINEMKIQMETGVLNPRDAKVFLAKEIITQYHSREAADEAEREFIKIFREKELPDEIPEYKVPGELIDGGVVLLPKVLFSAGTVKSISEAKRLISQGAVLVNQEKINDINFVLKPSKEPYTVKVGKRRFLKIIFEK.

A 'HIGH' region motif is present at residues 48–57 (PTAPDIHLGH). A 'KMSKS' region motif is present at residues 232–236 (KMSKS). ATP is bound at residue lysine 235. Residues 347–409 (VLLPKVLFSA…GKRRFLKIIF (63 aa)) enclose the S4 RNA-binding domain.

This sequence belongs to the class-I aminoacyl-tRNA synthetase family. TyrS type 2 subfamily. In terms of assembly, homodimer.

The protein localises to the cytoplasm. It carries out the reaction tRNA(Tyr) + L-tyrosine + ATP = L-tyrosyl-tRNA(Tyr) + AMP + diphosphate + H(+). Functionally, catalyzes the attachment of tyrosine to tRNA(Tyr) in a two-step reaction: tyrosine is first activated by ATP to form Tyr-AMP and then transferred to the acceptor end of tRNA(Tyr). This Carboxydothermus hydrogenoformans (strain ATCC BAA-161 / DSM 6008 / Z-2901) protein is Tyrosine--tRNA ligase.